The sequence spans 486 residues: Protein nucleotidyltransferase YdiU (486 aa).

Residues Gly-90, Gly-92, Arg-93, Lys-113, Asp-125, Gly-126, Arg-176, and Arg-183 each contribute to the ATP site. Catalysis depends on Asp-252, which acts as the Proton acceptor. Mg(2+) is bound by residues Asn-253 and Asp-262. Asp-262 is an ATP binding site.

Belongs to the SELO family. The cofactor is Mg(2+). Requires Mn(2+) as cofactor.

The enzyme catalyses L-seryl-[protein] + ATP = 3-O-(5'-adenylyl)-L-seryl-[protein] + diphosphate. It catalyses the reaction L-threonyl-[protein] + ATP = 3-O-(5'-adenylyl)-L-threonyl-[protein] + diphosphate. The catalysed reaction is L-tyrosyl-[protein] + ATP = O-(5'-adenylyl)-L-tyrosyl-[protein] + diphosphate. It carries out the reaction L-histidyl-[protein] + UTP = N(tele)-(5'-uridylyl)-L-histidyl-[protein] + diphosphate. The enzyme catalyses L-seryl-[protein] + UTP = O-(5'-uridylyl)-L-seryl-[protein] + diphosphate. It catalyses the reaction L-tyrosyl-[protein] + UTP = O-(5'-uridylyl)-L-tyrosyl-[protein] + diphosphate. Functionally, nucleotidyltransferase involved in the post-translational modification of proteins. It can catalyze the addition of adenosine monophosphate (AMP) or uridine monophosphate (UMP) to a protein, resulting in modifications known as AMPylation and UMPylation. In Stutzerimonas stutzeri (strain A1501) (Pseudomonas stutzeri), this protein is Protein nucleotidyltransferase YdiU.